Here is a 158-residue protein sequence, read N- to C-terminus: SsrA-binding protein (158 aa).

Belongs to the SmpB family.

Its subcellular location is the cytoplasm. Required for rescue of stalled ribosomes mediated by trans-translation. Binds to transfer-messenger RNA (tmRNA), required for stable association of tmRNA with ribosomes. tmRNA and SmpB together mimic tRNA shape, replacing the anticodon stem-loop with SmpB. tmRNA is encoded by the ssrA gene; the 2 termini fold to resemble tRNA(Ala) and it encodes a 'tag peptide', a short internal open reading frame. During trans-translation Ala-aminoacylated tmRNA acts like a tRNA, entering the A-site of stalled ribosomes, displacing the stalled mRNA. The ribosome then switches to translate the ORF on the tmRNA; the nascent peptide is terminated with the 'tag peptide' encoded by the tmRNA and targeted for degradation. The ribosome is freed to recommence translation, which seems to be the essential function of trans-translation. The sequence is that of SsrA-binding protein from Pseudoalteromonas atlantica (strain T6c / ATCC BAA-1087).